Reading from the N-terminus, the 704-residue chain is Elongation factor G (704 aa).

The region spanning 8–290 (ARYRNIGISA…AVIDYLPSPV (283 aa)) is the tr-type G domain. GTP contacts are provided by residues 17–24 (AHIDAGKT), 88–92 (DTPGH), and 142–145 (NKMD).

This sequence belongs to the TRAFAC class translation factor GTPase superfamily. Classic translation factor GTPase family. EF-G/EF-2 subfamily.

Its subcellular location is the cytoplasm. In terms of biological role, catalyzes the GTP-dependent ribosomal translocation step during translation elongation. During this step, the ribosome changes from the pre-translocational (PRE) to the post-translocational (POST) state as the newly formed A-site-bound peptidyl-tRNA and P-site-bound deacylated tRNA move to the P and E sites, respectively. Catalyzes the coordinated movement of the two tRNA molecules, the mRNA and conformational changes in the ribosome. The polypeptide is Elongation factor G (Salmonella arizonae (strain ATCC BAA-731 / CDC346-86 / RSK2980)).